The sequence spans 520 residues: Transactivator/viroplasmin protein (520 aa).

Residues 487–520 (QNASADSGPKDGPPPTRSIVEKEDVPTTSSKQVD) form a disordered region.

The protein belongs to the caulimoviridae viroplasmin family.

It localises to the host cytoplasm. In terms of biological role, enhances the ribosomal termination-reinitiation event leading to the translation of major open reading frames on the polycistronic viral RNAs. The protein is Transactivator/viroplasmin protein of Arabidopsis thaliana (Mouse-ear cress).